Reading from the N-terminus, the 420-residue chain is Heterogeneous nuclear ribonucleoprotein D-like (420 aa).

Disordered regions lie at residues 1–83 (MEVP…RRRP) and 96–120 (QRSA…SVTM). An Omega-N-methylarginine modification is found at Arg25. Over residues 36–52 (RQLAPLLPSLAPSSARQ) the composition is skewed to low complexity. 2 consecutive RRM domains span residues 148 to 230 (GKMF…KGKE) and 233 to 312 (KKVF…QPKE). N6-methyllysine is present on Lys161. Lys209 is covalently cross-linked (Glycyl lysine isopeptide (Lys-Gly) (interchain with G-Cter in SUMO2)). Lys216 is subject to N6-acetyllysine. Phosphoserine is present on Ser241. Disordered regions lie at residues 313–348 (VYRQ…NWNQ) and 398–420 (GQQS…YQPY). The span at 323–342 (GGRGAAAGGRGGTRGRGRGQ) shows a compositional bias: gly residues. A necessary for interaction with TNPO1 region spans residues 342 to 420 (QGQNWNQGFN…GNHQNNYQPY (79 aa)). The segment at 396 to 420 (YSGQQSTYGKASRGGGNHQNNYQPY) is necessary for its nuclear import and export. The residue at position 408 (Arg408) is a Dimethylated arginine; alternate. Omega-N-methylarginine; alternate is present on Arg408.

In terms of assembly, interacts with ZNF148. Interacts with TNPO1. Post-translationally, dimethylation of Arg-408 is probably of the asymmetric type. As to expression, expressed in heart, brain, placenta, lung, liver, skeletal muscle, kidney, pancreas, spleen, thymus, prostate, testis, ovary, small intestine, colon and leukocytes. Expressed in myeloid leukemia, gastric adenocarcinoma, cervical carcinoma, hepatoma, fibrosarcoma, colon adenocarcinoma, epidermoid carcinoma, osteosarcoma and urinary bladder carcinoma cells.

The protein localises to the nucleus. It localises to the cytoplasm. Acts as a transcriptional regulator. Promotes transcription repression. Promotes transcription activation in differentiated myotubes. Binds to double- and single-stranded DNA sequences. Binds to the transcription suppressor CATR sequence of the COX5B promoter. Binds with high affinity to RNA molecules that contain AU-rich elements (AREs) found within the 3'-UTR of many proto-oncogenes and cytokine mRNAs. Binds both to nuclear and cytoplasmic poly(A) mRNAs. Binds to poly(G) and poly(A), but not to poly(U) or poly(C) RNA homopolymers. Binds to the 5'-ACUAGC-3' RNA consensus sequence. The protein is Heterogeneous nuclear ribonucleoprotein D-like (HNRNPDL) of Homo sapiens (Human).